The following is a 169-amino-acid chain: Ribosome maturation factor RimM (169 aa).

The 71-residue stretch at 96–166 folds into the PRC barrel domain; the sequence is EDEFYFADLI…AVVVRPVEVE (71 aa).

Belongs to the RimM family. Binds ribosomal protein uS19.

The protein resides in the cytoplasm. Its function is as follows. An accessory protein needed during the final step in the assembly of 30S ribosomal subunit, possibly for assembly of the head region. Essential for efficient processing of 16S rRNA. May be needed both before and after RbfA during the maturation of 16S rRNA. It has affinity for free ribosomal 30S subunits but not for 70S ribosomes. The polypeptide is Ribosome maturation factor RimM (Acidiphilium cryptum (strain JF-5)).